Consider the following 557-residue polypeptide: uncharacterized protein (557 aa).

Residues 2–45 adopt a coiled-coil conformation; sequence NEDETSILNKKMEKIEVEMAEFERLGAEREKEAVERIVQEENQN. Disordered regions lie at residues 39 to 62, 101 to 127, 356 to 402, and 536 to 557; these read VQEE…KSRK, NRTY…RKNF, PSPS…YPSN, and ANAT…YDHI. 4 stretches are compositionally biased toward polar residues: residues 101–110, 358–380, 390–400, and 536–548; these read NRTYYKNSQG, PSFQ…SSNA, DSATYPTSIYP, and ANAT…NLDT.

Its subcellular location is the cytoplasm. The protein resides in the nucleus. This is an uncharacterized protein from Schizosaccharomyces pombe (strain 972 / ATCC 24843) (Fission yeast).